A 505-amino-acid chain; its full sequence is ATP synthase subunit alpha (505 aa).

171–178 (GDRQTGKT) is a binding site for ATP.

It belongs to the ATPase alpha/beta chains family. In terms of assembly, F-type ATPases have 2 components, CF(1) - the catalytic core - and CF(0) - the membrane proton channel. CF(1) has five subunits: alpha(3), beta(3), gamma(1), delta(1), epsilon(1). CF(0) has three main subunits: a(1), b(2) and c(9-12). The alpha and beta chains form an alternating ring which encloses part of the gamma chain. CF(1) is attached to CF(0) by a central stalk formed by the gamma and epsilon chains, while a peripheral stalk is formed by the delta and b chains.

It localises to the cell inner membrane. It carries out the reaction ATP + H2O + 4 H(+)(in) = ADP + phosphate + 5 H(+)(out). In terms of biological role, produces ATP from ADP in the presence of a proton gradient across the membrane. The alpha chain is a regulatory subunit. In Campylobacter concisus (strain 13826), this protein is ATP synthase subunit alpha.